The sequence spans 258 residues: MTLIHPTAVIDPKAELDSGVKVGAYTVIGPNVRIGANTEIGPHAVINGHTTIGENNRIFQFASLGEIPQDKKYRDEPTKLIIGNGNTIREFTTFNLGTVTGIGETRIGDDNWIMAYCHLAHDCVVGNHTIFANNASLAGHVTVGDYVVLGGYTLVFQFCRIGDYAMTAFAAGVHKDVPPYFMASGYRAEPAGLNSEGMRRNGFTAEQISAVKDVYKTLYHRGIPFEEAKADILRRAETQAELAVFQDFFAQSTRGIIR.

Belongs to the transferase hexapeptide repeat family. LpxA subfamily. In terms of assembly, homotrimer.

It is found in the cytoplasm. It carries out the reaction a (3R)-hydroxyacyl-[ACP] + UDP-N-acetyl-alpha-D-glucosamine = a UDP-3-O-[(3R)-3-hydroxyacyl]-N-acetyl-alpha-D-glucosamine + holo-[ACP]. The protein operates within glycolipid biosynthesis; lipid IV(A) biosynthesis; lipid IV(A) from (3R)-3-hydroxytetradecanoyl-[acyl-carrier-protein] and UDP-N-acetyl-alpha-D-glucosamine: step 1/6. Functionally, involved in the biosynthesis of lipid A, a phosphorylated glycolipid that anchors the lipopolysaccharide to the outer membrane of the cell. This chain is Acyl-[acyl-carrier-protein]--UDP-N-acetylglucosamine O-acyltransferase, found in Neisseria gonorrhoeae (strain ATCC 700825 / FA 1090).